Reading from the N-terminus, the 621-residue chain is SH2B adapter protein 2 (621 aa).

Phosphotyrosine is present on tyrosine 47. Position 130 is a phosphoserine (serine 130). A disordered region spans residues 143–166; sequence RRSSPEPDGGATPKAAEPASEPRD. The PH domain occupies 186-299; it reads DIQREGALRF…WVADIQGCVD (114 aa). Serine 303 carries the post-translational modification Phosphoserine. Residues 409–507 enclose the SH2 domain; it reads WFHGTLSRVK…SADITLRSYV (99 aa). 2 disordered regions span residues 507 to 528 and 549 to 611; these read VRAQ…PVPA and PASP…LGRA. A compositionally biased stretch (low complexity) spans 552-571; the sequence is PSNGAGASSSSGSSSSATSL. A Phosphoserine modification is found at serine 597. Tyrosine 618 is modified (phosphotyrosine).

This sequence belongs to the SH2B adapter family. Homodimer. Interacts with KIT/c-KIT, SHC1, EPOR, PDGFR, VAV1 and VAV3. Interacts (via N-terminal region) with SHC1. Interacts (via the phosphorylated C-terminus) with GRB2. Interacts (via its SH2 domain) with EPOR, INSR and KIT. Interacts with GRB2 after B-cell antigen receptor stimulation. Interacts (via PH domain) with VAV3. Interacts with NTRK1, NTRK2 and NTRK3 (phosphorylated); after stimulation of the receptor by its extracellular ligand and subsequent autophosphorylation of the receptor. Binds INSR, GRB2, ASB6 and CAP. Insulin stimulation leads to dissociation of CAP. Binds CBS only when SH2B2/APS has become phosphorylated. INSR binding does not depend on the phosphorylation of SH2B2/APS. Post-translationally, tyrosine phosphorylated by JAK2, KIT and other kinases activated by B-cell receptor in response to stimulation with cytokines, IL3, IL5, PDGF, IGF1, IGF2, CSF2/GM-CSF and cross-linking of the B-cell receptor complex. In terms of tissue distribution, strongly expressed in brain; also expressed in spleen, kidney and skeletal muscle, and at low levels in small intestine and bone marrow. Strongly expressed in B-cell lines, but not T-cell lines. Also expressed in myeloid and fibroblast cell lines.

Its subcellular location is the cytoplasm. It is found in the cell membrane. Its function is as follows. Adapter protein for several members of the tyrosine kinase receptor family. Involved in multiple signaling pathways. May be involved in coupling from immunoreceptor to Ras signaling. Acts as a negative regulator of cytokine signaling in collaboration with CBL. Binds to EPOR and suppresses EPO-induced STAT5 activation, possibly through a masking effect on STAT5 docking sites in EPOR. Suppresses PDGF-induced mitogenesis. May induce cytoskeletal reorganization via interaction with VAV3. This Mus musculus (Mouse) protein is SH2B adapter protein 2 (Sh2b2).